The sequence spans 357 residues: Histidinol-phosphate aminotransferase (357 aa).

Lys-212 bears the N6-(pyridoxal phosphate)lysine mark.

Belongs to the class-II pyridoxal-phosphate-dependent aminotransferase family. Histidinol-phosphate aminotransferase subfamily. In terms of assembly, homodimer. It depends on pyridoxal 5'-phosphate as a cofactor.

The catalysed reaction is L-histidinol phosphate + 2-oxoglutarate = 3-(imidazol-4-yl)-2-oxopropyl phosphate + L-glutamate. Its pathway is amino-acid biosynthesis; L-histidine biosynthesis; L-histidine from 5-phospho-alpha-D-ribose 1-diphosphate: step 7/9. The chain is Histidinol-phosphate aminotransferase from Pectobacterium carotovorum subsp. carotovorum (strain PC1).